Here is a 379-residue protein sequence, read N- to C-terminus: GDSL esterase/lipase At3g05180 (379 aa).

Residues 1–27 (METLFHTLLRLLLFVAISHTLSPLAGS) form the signal peptide. S43 serves as the catalytic Nucleophile. Residues N294 and N330 are each glycosylated (N-linked (GlcNAc...) asparagine). Active-site residues include D349 and H352.

This sequence belongs to the 'GDSL' lipolytic enzyme family.

The protein resides in the secreted. The chain is GDSL esterase/lipase At3g05180 from Arabidopsis thaliana (Mouse-ear cress).